The sequence spans 441 residues: NADH-quinone oxidoreductase subunit D 1 (441 aa).

Belongs to the complex I 49 kDa subunit family. NDH-1 is composed of 14 different subunits. Subunits NuoB, C, D, E, F, and G constitute the peripheral sector of the complex.

It localises to the cell membrane. The enzyme catalyses a quinone + NADH + 5 H(+)(in) = a quinol + NAD(+) + 4 H(+)(out). NDH-1 shuttles electrons from NADH, via FMN and iron-sulfur (Fe-S) centers, to quinones in the respiratory chain. The immediate electron acceptor for the enzyme in this species is believed to be a menaquinone. Couples the redox reaction to proton translocation (for every two electrons transferred, four hydrogen ions are translocated across the cytoplasmic membrane), and thus conserves the redox energy in a proton gradient. The polypeptide is NADH-quinone oxidoreductase subunit D 1 (Salinispora tropica (strain ATCC BAA-916 / DSM 44818 / JCM 13857 / NBRC 105044 / CNB-440)).